The chain runs to 592 residues: Imidazole glycerol phosphate synthase hisHF, chloroplastic (592 aa).

The N-terminal 55 residues, 1–55 (MEATAAPFSSIVSSRQNFSSSSSIRASSPASLFLSQKSIGNVNRKFKSPRSLSVR), are a transit peptide targeting the chloroplast. The region spanning 63 to 271 (VVTLLDYGAG…LHPKLPATQK (209 aa)) is the Glutamine amidotransferase type-1 domain. Active-site for GATase activity residues include Cys141, His246, and Glu248. A cyclase region spans residues 280-592 (LAKRVIACLD…LQEERIEVRI (313 aa)). Catalysis depends on residues Asp289 and Asp447.

This sequence in the C-terminal section; belongs to the HisA/HisF family.

It localises to the plastid. It is found in the chloroplast. It carries out the reaction 5-[(5-phospho-1-deoxy-D-ribulos-1-ylimino)methylamino]-1-(5-phospho-beta-D-ribosyl)imidazole-4-carboxamide + L-glutamine = D-erythro-1-(imidazol-4-yl)glycerol 3-phosphate + 5-amino-1-(5-phospho-beta-D-ribosyl)imidazole-4-carboxamide + L-glutamate + H(+). It catalyses the reaction L-glutamine + H2O = L-glutamate + NH4(+). Its pathway is amino-acid biosynthesis; L-histidine biosynthesis; L-histidine from 5-phospho-alpha-D-ribose 1-diphosphate: step 5/9. Its function is as follows. IGPS catalyzes the conversion of PRFAR and glutamine to IGP, AICAR and glutamate. The glutaminase domain produces the ammonia necessary for the cyclase domain to produce IGP and AICAR from PRFAR. The ammonia is channeled to the active site of the cyclase domain. In Arabidopsis thaliana (Mouse-ear cress), this protein is Imidazole glycerol phosphate synthase hisHF, chloroplastic (HISN4).